The sequence spans 158 residues: Putative ribonucleoside-diphosphate reductase small chain B (158 aa).

This sequence belongs to the ribonucleoside diphosphate reductase small chain family.

This chain is Putative ribonucleoside-diphosphate reductase small chain B (RNR2B), found in Arabidopsis thaliana (Mouse-ear cress).